Consider the following 250-residue polypeptide: Ureidoacrylate amidohydrolase RutB (250 aa).

Asp44 functions as the Proton acceptor in the catalytic mechanism. Lys153 is a catalytic residue. Catalysis depends on Cys186, which acts as the Nucleophile.

This sequence belongs to the isochorismatase family. RutB subfamily.

It carries out the reaction (Z)-3-ureidoacrylate + H2O + H(+) = (Z)-3-aminoacrylate + NH4(+) + CO2. It catalyses the reaction (Z)-3-ureidoacrylate + H2O = (Z)-3-aminoacrylate + carbamate + H(+). The enzyme catalyses (Z)-2-methylureidoacrylate + H2O + H(+) = (Z)-2-methylaminoacrylate + NH4(+) + CO2. Hydrolyzes ureidoacrylate to form aminoacrylate and carbamate. The carbamate hydrolyzes spontaneously, thereby releasing one of the nitrogen atoms of the pyrimidine ring as ammonia and one of its carbon atoms as CO2. The sequence is that of Ureidoacrylate amidohydrolase RutB from Pantoea ananatis (strain LMG 20103).